A 396-amino-acid polypeptide reads, in one-letter code: S-adenosylmethionine synthase (396 aa).

His16 contacts ATP. Asp18 is a Mg(2+) binding site. A K(+)-binding site is contributed by Glu44. Residues Glu57 and Gln100 each coordinate L-methionine. Positions 100–110 (QSPDIAQGVDR) are flexible loop. Residues 167-169 (DAK), 233-234 (RF), Asp242, 248-249 (RK), Ala265, and Lys269 contribute to the ATP site. Residue Asp242 coordinates L-methionine. L-methionine is bound at residue Lys273.

This sequence belongs to the AdoMet synthase family. As to quaternary structure, homotetramer; dimer of dimers. Requires Mg(2+) as cofactor. It depends on K(+) as a cofactor.

The protein resides in the cytoplasm. The enzyme catalyses L-methionine + ATP + H2O = S-adenosyl-L-methionine + phosphate + diphosphate. The protein operates within amino-acid biosynthesis; S-adenosyl-L-methionine biosynthesis; S-adenosyl-L-methionine from L-methionine: step 1/1. Catalyzes the formation of S-adenosylmethionine (AdoMet) from methionine and ATP. The overall synthetic reaction is composed of two sequential steps, AdoMet formation and the subsequent tripolyphosphate hydrolysis which occurs prior to release of AdoMet from the enzyme. In Paraburkholderia xenovorans (strain LB400), this protein is S-adenosylmethionine synthase.